We begin with the raw amino-acid sequence, 372 residues long: Geranylgeranyl pyrophosphate synthase 4 (372 aa).

Positions 1 to 22 (MEAQNIFLYLLIVFLSLHFVFT) are cleaved as a signal peptide. Positions 121, 124, and 153 each coordinate isopentenyl diphosphate. D160 and D166 together coordinate Mg(2+). R171 is a binding site for dimethylallyl diphosphate. R172 is an isopentenyl diphosphate binding site. The dimethylallyl diphosphate site is built by K257, T258, Q295, K312, and K322.

It belongs to the FPP/GGPP synthase family. As to quaternary structure, monomer. Requires Mg(2+) as cofactor. In terms of tissue distribution, faintly expressed in flowers. Expressed in roots and siliques.

The protein localises to the endoplasmic reticulum. The enzyme catalyses isopentenyl diphosphate + dimethylallyl diphosphate = (2E)-geranyl diphosphate + diphosphate. It catalyses the reaction isopentenyl diphosphate + (2E)-geranyl diphosphate = (2E,6E)-farnesyl diphosphate + diphosphate. It carries out the reaction isopentenyl diphosphate + (2E,6E)-farnesyl diphosphate = (2E,6E,10E)-geranylgeranyl diphosphate + diphosphate. It participates in isoprenoid biosynthesis; farnesyl diphosphate biosynthesis; farnesyl diphosphate from geranyl diphosphate and isopentenyl diphosphate: step 1/1. Its pathway is isoprenoid biosynthesis; geranyl diphosphate biosynthesis; geranyl diphosphate from dimethylallyl diphosphate and isopentenyl diphosphate: step 1/1. It functions in the pathway isoprenoid biosynthesis; geranylgeranyl diphosphate biosynthesis; geranylgeranyl diphosphate from farnesyl diphosphate and isopentenyl diphosphate: step 1/1. Catalyzes the trans-addition of the three molecules of isopentenyl diphosphate (IPP) onto dimethylallyl diphosphate (DMAPP) to form geranylgeranyl diphosphate. In Arabidopsis thaliana (Mouse-ear cress), this protein is Geranylgeranyl pyrophosphate synthase 4.